The chain runs to 406 residues: Putative cfxQ-like protein R730 (406 aa).

The segment at methionine 1–lysine 37 is disordered. A compositionally biased stretch (low complexity) spans asparagine 13–proline 32. Glycine 173–serine 180 is an ATP binding site.

Belongs to the CbxX/CfxQ family.

This Acanthamoeba polyphaga mimivirus (APMV) protein is Putative cfxQ-like protein R730.